Here is a 219-residue protein sequence, read N- to C-terminus: uncharacterized protein (219 aa).

A run of 2 helical transmembrane segments spans residues 81–101 (VVKWFIIVDPLINSILINYLI) and 168–188 (PIMEIQMVAVPLALPSPTALV).

It localises to the membrane. This is an uncharacterized protein from Saccharomyces cerevisiae (strain ATCC 204508 / S288c) (Baker's yeast).